A 302-amino-acid chain; its full sequence is Zinc transporter ZIP1 (302 aa).

Topologically, residues 1-6 are extracellular; it reads MEYLLQ. The helical transmembrane segment at 7–27 threads the bilayer; it reads VKIAALVGLLFLTLIFGFIPA. Residues 28–44 lie on the Cytoplasmic side of the membrane; that stretch reads RVKWFRDTDGTETHRTV. The helical transmembrane segment at 45-65 threads the bilayer; sequence LSLISCFAGGVFLSACFLDII. At 66–80 the chain is on the extracellular side; it reads PDYLSDINTELHARQ. Residues 81–101 form a helical membrane-spanning segment; the sequence is LETSFPLPEFIMAAGFFTVLI. Residues 102 to 158 are Cytoplasmic-facing; that stretch reads LERIVLNCKEMRATHEERTTLIPERKSGHGHGHGDGPDPESSGHHVHVDFQAHSPFR. Residues 123-145 form a disordered region; that stretch reads IPERKSGHGHGHGDGPDPESSGH. A helical transmembrane segment spans residues 159 to 179; the sequence is SFMLFLSLSLHSIFEGLAIGL. Over 180–185 the chain is Extracellular; the sequence is QTTDPK. The helical transmembrane segment at 186 to 206 threads the bilayer; it reads VVEICIAILVHKSIIVFSLAV. The Cytoplasmic segment spans residues 207–216; that stretch reads KLVQSAIPPL. The chain crosses the membrane as a helical span at residues 217 to 237; sequence WVAAYIGVFALMSPVGIAIGI. Topologically, residues 238 to 251 are extracellular; sequence SVMEAQLAAGPLIQ. Residues 252–272 form a helical membrane-spanning segment; sequence AILEGFAAGTFVYITFLEILP. The Cytoplasmic segment spans residues 273–281; the sequence is HELNSPGKQ. Residues 282–302 form a helical membrane-spanning segment; that stretch reads LLKVLFLLLGFSIMAALSFLG.

This sequence belongs to the ZIP transporter (TC 2.A.5) family. Highest levels in ovary, lower levels in intestine and gill, barely detected in kidney.

Its subcellular location is the cell membrane. It is found in the endoplasmic reticulum membrane. The catalysed reaction is Zn(2+)(in) = Zn(2+)(out). Transporter for the divalent cation Zn(2+). Mediates the influx of Zn(2+) into cells from extracellular space. This Takifugu rubripes (Japanese pufferfish) protein is Zinc transporter ZIP1 (slc39a1).